The chain runs to 643 residues: Rhophilin-1 (643 aa).

Positions 1-43 (MILEERPDGQGTGEESSRPQDDGSIRKGYGSFVQNQPGQLQSH) are disordered. Residues 15–25 (ESSRPQDDGSI) show a composition bias toward basic and acidic residues. Residues 30 to 104 (GSFVQNQPGQ…LAELSTSVDV (75 aa)) form the REM-1 domain. Position 31 is a phosphoserine (Ser31). Polar residues predominate over residues 32–42 (FVQNQPGQLQS). Residues 115–462 (PMIPLGLKET…LAKYSQLERE (348 aa)) enclose the BRO1 domain. The region spanning 500–577 (PVHMTRGEGS…EGVSLQVVSL (78 aa)) is the PDZ domain.

The protein belongs to the RHPN family. Binds specifically to GTP-Rho. Interacts with ROPN1. Highly expressed in testis.

Its function is as follows. Has no enzymatic activity. May serve as a target for Rho, and interact with some cytoskeletal component upon Rho binding or relay a Rho signal to other molecules. The polypeptide is Rhophilin-1 (Rhpn1) (Mus musculus (Mouse)).